The sequence spans 92 residues: Putative transition state regulator Abh (92 aa).

In terms of domain architecture, SpoVT-AbrB spans 5-50; that stretch reads GVVRKVDELGRIVMPIELRRALDIAIKDSIEFFVDGDKIILKKYKP.

It to B.subtilis AbrB and SpoVT.

This Bacillus subtilis (strain 168) protein is Putative transition state regulator Abh (abh).